Reading from the N-terminus, the 280-residue chain is Probable endonuclease 4 (280 aa).

Positions 68, 108, 143, 177, 180, 214, 227, 229, and 259 each coordinate Zn(2+).

The protein belongs to the AP endonuclease 2 family. It depends on Zn(2+) as a cofactor.

It catalyses the reaction Endonucleolytic cleavage to 5'-phosphooligonucleotide end-products.. Functionally, endonuclease IV plays a role in DNA repair. It cleaves phosphodiester bonds at apurinic or apyrimidinic (AP) sites, generating a 3'-hydroxyl group and a 5'-terminal sugar phosphate. This chain is Probable endonuclease 4, found in Cenarchaeum symbiosum (strain A).